The following is a 226-amino-acid chain: ATP synthase F(0) complex subunit a (226 aa).

Helical transmembrane passes span 9–29 (FITP…FPAM), 68–88 (WALM…LGLV), 97–117 (QLSM…ITGF), 138–158 (IPML…ALAI), 164–184 (ITAG…LTSI), and 201–223 (ILEF…LYLH).

This sequence belongs to the ATPase A chain family. As to quaternary structure, component of the ATP synthase complex composed at least of ATP5F1A/subunit alpha, ATP5F1B/subunit beta, ATP5MC1/subunit c (homooctomer), MT-ATP6/subunit a, MT-ATP8/subunit 8, ATP5ME/subunit e, ATP5MF/subunit f, ATP5MG/subunit g, ATP5MK/subunit k, ATP5MJ/subunit j, ATP5F1C/subunit gamma, ATP5F1D/subunit delta, ATP5F1E/subunit epsilon, ATP5PF/subunit F6, ATP5PB/subunit b, ATP5PD/subunit d, ATP5PO/subunit OSCP. ATP synthase complex consists of a soluble F(1) head domain (subunits alpha(3) and beta(3)) - the catalytic core - and a membrane F(0) domain - the membrane proton channel (subunits c, a, 8, e, f, g, k and j). These two domains are linked by a central stalk (subunits gamma, delta, and epsilon) rotating inside the F1 region and a stationary peripheral stalk (subunits F6, b, d, and OSCP). Interacts with DNAJC30; interaction is direct.

The protein resides in the mitochondrion inner membrane. It carries out the reaction H(+)(in) = H(+)(out). In terms of biological role, subunit a, of the mitochondrial membrane ATP synthase complex (F(1)F(0) ATP synthase or Complex V) that produces ATP from ADP in the presence of a proton gradient across the membrane which is generated by electron transport complexes of the respiratory chain. ATP synthase complex consist of a soluble F(1) head domain - the catalytic core - and a membrane F(1) domain - the membrane proton channel. These two domains are linked by a central stalk rotating inside the F(1) region and a stationary peripheral stalk. During catalysis, ATP synthesis in the catalytic domain of F(1) is coupled via a rotary mechanism of the central stalk subunits to proton translocation. With the subunit c (ATP5MC1), forms the proton-conducting channel in the F(0) domain, that contains two crucial half-channels (inlet and outlet) that facilitate proton movement from the mitochondrial intermembrane space (IMS) into the matrix. Protons are taken up via the inlet half-channel and released through the outlet half-channel, following a Grotthuss mechanism. The sequence is that of ATP synthase F(0) complex subunit a from Dugong dugon (Dugong).